The chain runs to 203 residues: Pacifastin-like protease inhibitor cvp4 (203 aa).

The first 19 residues, 1 to 19, serve as a signal peptide directing secretion; the sequence is MGFLACALLVVATAHAATA. Pacifastin domains lie at 23 to 59, 85 to 121, and 147 to 184; these read PETCEIGSNFKNYCNNCYCFDGVMDHALCTRESCDRN, DEPCTPGENFKYYCNDCQCLDGLRAHAMCTRMRCDRN, and DESCAPGASFKYYCNSCTCGAEGKVAEAQCTSQECDRY. Disulfide bonds link Cys26–Cys41, Cys36–Cys56, Cys39–Cys51, Cys88–Cys103, Cys98–Cys118, and Cys101–Cys113. Residues 129-148 are compositionally biased toward basic and acidic residues; sequence RKYPEPEKWNSEKERKKSDE. The segment at 129 to 150 is disordered; the sequence is RKYPEPEKWNSEKERKKSDESC. Intrachain disulfides connect Cys150/Cys165, Cys160/Cys181, and Cys163/Cys176.

The protein belongs to the protease inhibitor I19 family. Expressed by the venom gland.

The protein localises to the secreted. In terms of biological role, inhibits trypsin activity and prophenoloxidase (PPO) activation, an enzyme essential for both clotting and insect innate immune responses. It does not inhibit activity of chymotrypsin and protease K, and has no effect on phenoloxidase (PO) activity. The chain is Pacifastin-like protease inhibitor cvp4 from Pimpla hypochondriaca (Parasitoid wasp).